A 413-amino-acid polypeptide reads, in one-letter code: MSTDPTSKPAFPITDEVRHALAVTKRGVDELLIEEEFAQKLAKSAATDKPLRIKLGLDPTAPDIHLGHTVVLNKMRQLQDLGHTVIFLIGDFTSLIGDPSGRNATRPPLTREQIESNAKTYFEQAALVLDREKTEIRYNSEWSMPLGADGMIKLASRYTVARMLEREDFTKRFQGGIPISIHEFLYPLMQGYDSVALNADLELGGTDQKFNLLVGRELQKQYGQEQQCILTMPLLEGLDGVEKMSKSKGNYVGISEKPTDMFGKLMSISDVLMWRYFELLSFRSLDEIARFRGEAEGGRNPRDFKVMLAQEIVARFHSQADAERALEDFNHRAKGGVPDDIPAVTLAGAPLAIGQLLKQAGLVPSTSEALRNIEQGGVKIDGATVSDKALKVDAGEFVVQVGKRRFARVTLTA.

The 'HIGH' region signature appears at 59-68 (PTAPDIHLGH). Residues 243-247 (KMSKS) carry the 'KMSKS' region motif. Lys246 provides a ligand contact to ATP. The S4 RNA-binding domain maps to 351–411 (LAIGQLLKQA…GKRRFARVTL (61 aa)).

It belongs to the class-I aminoacyl-tRNA synthetase family. TyrS type 2 subfamily. In terms of assembly, homodimer.

The protein localises to the cytoplasm. It catalyses the reaction tRNA(Tyr) + L-tyrosine + ATP = L-tyrosyl-tRNA(Tyr) + AMP + diphosphate + H(+). Its function is as follows. Catalyzes the attachment of tyrosine to tRNA(Tyr) in a two-step reaction: tyrosine is first activated by ATP to form Tyr-AMP and then transferred to the acceptor end of tRNA(Tyr). This chain is Tyrosine--tRNA ligase, found in Burkholderia pseudomallei (strain K96243).